The following is a 377-amino-acid chain: Histone deacetylase 8 (377 aa).

Residues 14–324 form a histone deacetylase region; it reads LPPVYIYSPE…WTYLTGVILG (311 aa). Ser-39 is subject to Phosphoserine. Asp-101 contributes to the substrate binding site. His-143 (proton acceptor) is an active-site residue. Gly-151 serves as a coordination point for substrate. A divalent metal cation is bound by residues Asp-178, His-180, and Asp-267. Tyr-306 is a binding site for substrate.

The protein belongs to the histone deacetylase family. HD type 1 subfamily. As to quaternary structure, interacts with CBFA2T3. Interacts with phosphorylated SMG5/EST1B; this interaction protects SMG5 from ubiquitin-mediated degradation. Associates with alpha-SMA (smooth muscle alpha-actin). The cofactor is a divalent metal cation. Phosphorylated by PKA on serine 39. Phosphorylation reduces deacetylase activity observed preferentially on histones H3 and H4.

The protein resides in the nucleus. It localises to the chromosome. It is found in the cytoplasm. It catalyses the reaction N(6)-acetyl-L-lysyl-[histone] + H2O = L-lysyl-[histone] + acetate. It carries out the reaction N(6)-acetyl-L-lysyl-[protein] + H2O = L-lysyl-[protein] + acetate. The catalysed reaction is N(6)-(2E)-butenoyl-L-lysyl-[protein] + H2O = (2E)-2-butenoate + L-lysyl-[protein]. Its activity is regulated as follows. Its activity is inhibited by trichostatin A (TSA) and butyrate, 2 well known histone deacetylase inhibitors. histone deacetylase inhibitor. Its function is as follows. Histone deacetylase that catalyzes the deacetylation of lysine residues on the N-terminal part of the core histones (H2A, H2B, H3 and H4). Histone deacetylation gives a tag for epigenetic repression and plays an important role in transcriptional regulation, cell cycle progression and developmental events. Histone deacetylases act via the formation of large multiprotein complexes. Also involved in the deacetylation of cohesin complex protein SMC3 regulating release of cohesin complexes from chromatin. May play a role in smooth muscle cell contractility. In addition to protein deacetylase activity, also has protein-lysine deacylase activity: acts as a protein decrotonylase by mediating decrotonylation ((2E)-butenoyl) of histones. This is Histone deacetylase 8 (Hdac8) from Mus musculus (Mouse).